The chain runs to 179 residues: Large ribosomal subunit protein uL6 (179 aa).

This sequence belongs to the universal ribosomal protein uL6 family. In terms of assembly, part of the 50S ribosomal subunit.

Functionally, this protein binds to the 23S rRNA, and is important in its secondary structure. It is located near the subunit interface in the base of the L7/L12 stalk, and near the tRNA binding site of the peptidyltransferase center. This is Large ribosomal subunit protein uL6 from Metamycoplasma arthritidis (strain 158L3-1) (Mycoplasma arthritidis).